Reading from the N-terminus, the 481-residue chain is Aspartyl/glutamyl-tRNA(Asn/Gln) amidotransferase subunit B (481 aa).

Belongs to the GatB/GatE family. GatB subfamily. As to quaternary structure, heterotrimer of A, B and C subunits.

The enzyme catalyses L-glutamyl-tRNA(Gln) + L-glutamine + ATP + H2O = L-glutaminyl-tRNA(Gln) + L-glutamate + ADP + phosphate + H(+). It carries out the reaction L-aspartyl-tRNA(Asn) + L-glutamine + ATP + H2O = L-asparaginyl-tRNA(Asn) + L-glutamate + ADP + phosphate + 2 H(+). Its function is as follows. Allows the formation of correctly charged Asn-tRNA(Asn) or Gln-tRNA(Gln) through the transamidation of misacylated Asp-tRNA(Asn) or Glu-tRNA(Gln) in organisms which lack either or both of asparaginyl-tRNA or glutaminyl-tRNA synthetases. The reaction takes place in the presence of glutamine and ATP through an activated phospho-Asp-tRNA(Asn) or phospho-Glu-tRNA(Gln). The chain is Aspartyl/glutamyl-tRNA(Asn/Gln) amidotransferase subunit B from Pseudomonas paraeruginosa (strain DSM 24068 / PA7) (Pseudomonas aeruginosa (strain PA7)).